We begin with the raw amino-acid sequence, 154 residues long: uncharacterized protein (154 aa).

Serine 47 bears the Phosphoserine mark.

This sequence to yeast YPL229w.

This is an uncharacterized protein from Saccharomyces cerevisiae (strain ATCC 204508 / S288c) (Baker's yeast).